The sequence spans 365 residues: Putative F-box/kelch-repeat protein At4g39290 (365 aa).

In terms of domain architecture, F-box spans 10 to 58 (QMTFSMLPDDLVLNCLARVSKVYYPSLSFVSKKFRSLIASTELQELRSF). Kelch repeat units follow at residues 118 to 165 (DIYA…CVLN) and 167 to 213 (KIYV…KIVG).

In Arabidopsis thaliana (Mouse-ear cress), this protein is Putative F-box/kelch-repeat protein At4g39290.